The sequence spans 60 residues: Large ribosomal subunit protein bL32 (60 aa).

Belongs to the bacterial ribosomal protein bL32 family.

The sequence is that of Large ribosomal subunit protein bL32 from Pseudothermotoga lettingae (strain ATCC BAA-301 / DSM 14385 / NBRC 107922 / TMO) (Thermotoga lettingae).